A 215-amino-acid polypeptide reads, in one-letter code: Cytochrome b6 (215 aa).

The helical transmembrane segment at isoleucine 32–phenylalanine 52 threads the bilayer. Residue cysteine 35 coordinates heme c. Positions 86 and 100 each coordinate heme b. 3 helical membrane passes run alanine 90 to phenylalanine 110, leucine 116 to tyrosine 136, and leucine 186 to isoleucine 206. Positions 187 and 202 each coordinate heme b.

This sequence belongs to the cytochrome b family. PetB subfamily. As to quaternary structure, the 4 large subunits of the cytochrome b6-f complex are cytochrome b6, subunit IV (17 kDa polypeptide, PetD), cytochrome f and the Rieske protein, while the 4 small subunits are PetG, PetL, PetM and PetN. The complex functions as a dimer. The cofactor is heme b. Heme c is required as a cofactor.

Its subcellular location is the cellular thylakoid membrane. In terms of biological role, component of the cytochrome b6-f complex, which mediates electron transfer between photosystem II (PSII) and photosystem I (PSI), cyclic electron flow around PSI, and state transitions. This is Cytochrome b6 from Synechococcus sp. (strain JA-3-3Ab) (Cyanobacteria bacterium Yellowstone A-Prime).